Here is a 219-residue protein sequence, read N- to C-terminus: ATP-dependent Clp protease proteolytic subunit (219 aa).

The segment at 1–22 is disordered; sequence MPVGVPKVPFLNPNPDPEPDSV. Residue Ser-116 is the Nucleophile of the active site. His-141 is a catalytic residue.

Belongs to the peptidase S14 family. As to quaternary structure, component of the chloroplastic Clp protease core complex.

The protein resides in the plastid. It is found in the chloroplast stroma. The enzyme catalyses Hydrolysis of proteins to small peptides in the presence of ATP and magnesium. alpha-casein is the usual test substrate. In the absence of ATP, only oligopeptides shorter than five residues are hydrolyzed (such as succinyl-Leu-Tyr-|-NHMec, and Leu-Tyr-Leu-|-Tyr-Trp, in which cleavage of the -Tyr-|-Leu- and -Tyr-|-Trp bonds also occurs).. Functionally, cleaves peptides in various proteins in a process that requires ATP hydrolysis. Has a chymotrypsin-like activity. Plays a major role in the degradation of misfolded proteins. The sequence is that of ATP-dependent Clp protease proteolytic subunit from Pelargonium hortorum (Common geranium).